The chain runs to 142 residues: Rhinocerosin (142 aa).

The signal sequence occupies residues 1–16 (MMKLYIVFGFIAFSAA). Residues 17 to 70 (YVVPEGYYEPEYYPADGYESERVARASPAELIFDEDLADEPEVEEPQYYIRTRR) constitute a propeptide that is removed on maturation. Residues 72–96 (LQPGAPNFPMPGSQLPTSITSNIEK) form a disordered region. The span at 85 to 96 (QLPTSITSNIEK) shows a compositional bias: polar residues.

It belongs to the coleoptericin family. In terms of tissue distribution, strongly expressed in the fat body and the Malpighian tubules, and weakly expressed in hemocytes and midgut.

It is found in the secreted. Functionally, has strong antibacterial activity against E.coli, Streptococcus pyogenes, Staphylococcus aureus but not against Pseudomonas aeruginosa. This chain is Rhinocerosin, found in Oryctes rhinoceros (Coconut rhinoceros beetle).